The chain runs to 341 residues: UDP-3-O-(3-hydroxymyristoyl)glucosamine N-acyltransferase (341 aa).

H239 functions as the Proton acceptor in the catalytic mechanism.

Belongs to the transferase hexapeptide repeat family. LpxD subfamily. As to quaternary structure, homotrimer.

The catalysed reaction is a UDP-3-O-[(3R)-3-hydroxyacyl]-alpha-D-glucosamine + a (3R)-hydroxyacyl-[ACP] = a UDP-2-N,3-O-bis[(3R)-3-hydroxyacyl]-alpha-D-glucosamine + holo-[ACP] + H(+). It catalyses the reaction UDP-3-O-[(3R)-3-hydroxytetradecanoyl]-alpha-D-glucosamine + (3R)-hydroxytetradecanoyl-[ACP] = UDP-2-N,3-O-bis[(3R)-3-hydroxytetradecanoyl]-alpha-D-glucosamine + holo-[ACP] + H(+). The protein operates within glycolipid biosynthesis; lipid IV(A) biosynthesis; lipid IV(A) from (3R)-3-hydroxytetradecanoyl-[acyl-carrier-protein] and UDP-N-acetyl-alpha-D-glucosamine: step 3/6. Functionally, catalyzes the N-acylation of UDP-3-O-(hydroxytetradecanoyl)glucosamine using 3-hydroxytetradecanoyl-ACP as the acyl donor. Is involved in the biosynthesis of lipid A, a phosphorylated glycolipid that anchors the lipopolysaccharide to the outer membrane of the cell. This Salmonella choleraesuis (strain SC-B67) protein is UDP-3-O-(3-hydroxymyristoyl)glucosamine N-acyltransferase.